We begin with the raw amino-acid sequence, 152 residues long: Small ribosomal subunit protein uS15 (152 aa).

The protein belongs to the universal ribosomal protein uS15 family. Part of the 30S ribosomal subunit.

This is Small ribosomal subunit protein uS15 from Methanospirillum hungatei JF-1 (strain ATCC 27890 / DSM 864 / NBRC 100397 / JF-1).